We begin with the raw amino-acid sequence, 419 residues long: L-rhamnose isomerase (419 aa).

Mn(2+)-binding residues include His262, Asp294, and Asp296.

This sequence belongs to the rhamnose isomerase family. As to quaternary structure, homotetramer. Requires Mn(2+) as cofactor.

It localises to the cytoplasm. The catalysed reaction is L-rhamnopyranose = L-rhamnulose. The protein operates within carbohydrate degradation; L-rhamnose degradation; glycerone phosphate from L-rhamnose: step 1/3. In terms of biological role, catalyzes the interconversion of L-rhamnose and L-rhamnulose. This Salmonella gallinarum (strain 287/91 / NCTC 13346) protein is L-rhamnose isomerase.